Here is a 396-residue protein sequence, read N- to C-terminus: Tryptophan synthase beta chain (396 aa).

Lysine 86 bears the N6-(pyridoxal phosphate)lysine mark.

This sequence belongs to the TrpB family. Tetramer of two alpha and two beta chains. Requires pyridoxal 5'-phosphate as cofactor.

The enzyme catalyses (1S,2R)-1-C-(indol-3-yl)glycerol 3-phosphate + L-serine = D-glyceraldehyde 3-phosphate + L-tryptophan + H2O. Its pathway is amino-acid biosynthesis; L-tryptophan biosynthesis; L-tryptophan from chorismate: step 5/5. Functionally, the beta subunit is responsible for the synthesis of L-tryptophan from indole and L-serine. This chain is Tryptophan synthase beta chain, found in Pectobacterium atrosepticum (strain SCRI 1043 / ATCC BAA-672) (Erwinia carotovora subsp. atroseptica).